Consider the following 175-residue polypeptide: Vitamin K epoxide reductase complex subunit 1-like protein 1 (175 aa).

Over 1-12 (MAAPVLRVSTPR) the chain is Cytoplasmic. A helical membrane pass occupies residues 13–35 (WERIARVLVCLLGILLSLYAFHV). Residues 36 to 86 (EREHARDPSYKALCDVSSSISCSKVFGSRWGRGFGLLGSIFGNDSALNQPN) lie on the Lumenal side of the membrane. Cys49 and Cys57 are oxidised to a cystine. Asn86 provides a ligand contact to (S)-warfarin. The helical transmembrane segment at 87–101 (SVYGIVFYAFQLLLG) threads the bilayer. The Cytoplasmic portion of the chain corresponds to 102–106 (MTVSA). Residues 107–134 (MAALILMTTSIMSVVGSLYLGYILYFVL) form a helical membrane-spanning segment. Over 135 to 137 (KDL) the chain is Lumenal. The cysteines at positions 138 and 141 are disulfide-linked. The helical transmembrane segment at 138–159 (CVICVTTYALNFILFVLNYKRL) threads the bilayer. Phylloquinone contacts are provided by Cys141 and Tyr145. Position 145 (Tyr145) interacts with (S)-warfarin. Residues 160–175 (VYLNEAWKQKLQAKQD) lie on the Cytoplasmic side of the membrane.

It belongs to the VKOR family.

Its subcellular location is the endoplasmic reticulum membrane. The catalysed reaction is phylloquinone + [protein]-disulfide + H2O = 2,3-epoxyphylloquinone + [protein]-dithiol. It catalyses the reaction phylloquinol + [protein]-disulfide = phylloquinone + [protein]-dithiol. Its activity is regulated as follows. Inhibited by warfarin (coumadin). Warfarin locks VKORC1 in both redox states into the closed conformation. Involved in vitamin K metabolism. Can reduce inactive vitamin K 2,3-epoxide to active vitamin K, and may contribute to vitamin K-mediated protection against oxidative stress. Plays a role in vitamin K-dependent gamma-carboxylation of Glu residues in target proteins. This is Vitamin K epoxide reductase complex subunit 1-like protein 1 (vkorc1l1) from Takifugu rubripes (Japanese pufferfish).